The sequence spans 347 residues: L-threonine 3-dehydrogenase (347 aa).

Cys42 is a Zn(2+) binding site. Active-site charge relay system residues include Thr44 and His47. Zn(2+) contacts are provided by His67, Glu68, Cys97, Cys100, Cys103, and Cys111. NAD(+) is bound by residues Ile180, Asp200, Arg205, Leu267–Leu269, and Ile292–Thr293.

Belongs to the zinc-containing alcohol dehydrogenase family. In terms of assembly, homotetramer. Zn(2+) is required as a cofactor.

It is found in the cytoplasm. The catalysed reaction is L-threonine + NAD(+) = (2S)-2-amino-3-oxobutanoate + NADH + H(+). Its pathway is amino-acid degradation; L-threonine degradation via oxydo-reductase pathway; glycine from L-threonine: step 1/2. Its function is as follows. Catalyzes the NAD(+)-dependent oxidation of L-threonine to 2-amino-3-ketobutyrate. The protein is L-threonine 3-dehydrogenase of Bacillus velezensis (strain DSM 23117 / BGSC 10A6 / LMG 26770 / FZB42) (Bacillus amyloliquefaciens subsp. plantarum).